Here is a 424-residue protein sequence, read N- to C-terminus: Hydrolase ORFZ (424 aa).

The active-site Nucleophile is serine 243.

This sequence belongs to the AB hydrolase superfamily. FUS2 hydrolase family. As to quaternary structure, homodimer.

It functions in the pathway secondary metabolite biosynthesis. Its function is as follows. Hydrolyase; part of the gene cluster that mediates the biosynthesis of a tyrosine-derived cytochalasan acting as a fungal signal recognized by resistant rice plants and leads to avirulence in Pi33 resistant rice cultivars. The first step in the pathway is catalyzed by the hybrid PKS-NRPS ACE1, assisted by the enoyl reductase RAP1, that are responsible for fusion of the tyrosine precursor and the polyketide backbone. The polyketide synthase module (PKS) of ACE1 is responsible for the synthesis of the polyketide backbone and the downstream nonribosomal peptide synthetase (NRPS) amidates the carboxyl end of the polyketide with the tyrosine precursor. Because ACE1 lacks a designated enoylreductase (ER) domain, the required activity is provided the enoyl reductase RAP1. Reduction by the hydrolyase ORFZ, followed by dehydration and intra-molecular Diels-Alder cyclization by the Diels-Alderase ORF3 then yield the required isoindolone-fused macrocycle. A number of oxidative steps catalyzed by the tailoring enzymes identified within the cluster, including cytochrome P450 monooxygenases CYP1 to CYP4, the FAD-linked oxidoreductase OXR2 and the short-chain dehydrogenase/reductase OXR1, are further required to afford the final cytochalasans that confer avirulence and which have still to be identified. The monooxygenase CYP1 has been shown to be a site-selective C-18 hydroxylase whereas the function of CYP3 is the site-selective epoxidation of the C-6/C-7 olefin that is present in some intermediate compounds. Finally, SYN2 and RAP2 are not required for avirulence in Pi33 resistant rice cultivars. The chain is Hydrolase ORFZ from Pyricularia oryzae (strain 70-15 / ATCC MYA-4617 / FGSC 8958) (Rice blast fungus).